The following is a 295-amino-acid chain: 5'-adenylylsulfate reductase-like 6 (295 aa).

Positions M1–A22 are cleaved as a signal peptide. The Thioredoxin domain occupies T23–G161. An N-linked (GlcNAc...) asparagine glycan is attached at N136. A helical transmembrane segment spans residues A208–V228.

It is found in the membrane. The chain is 5'-adenylylsulfate reductase-like 6 (APRL6) from Arabidopsis thaliana (Mouse-ear cress).